A 210-amino-acid chain; its full sequence is Na(+)-translocating NADH-quinone reductase subunit D (210 aa).

6 consecutive transmembrane segments (helical) span residues 14–34 (PIIN…ALAV), 42–62 (LVMT…ISLI), 72–92 (IIVQ…VLQA), 96–116 (AISK…IVMG), 131–151 (FMDG…VGVV), and 178–198 (NGLL…IWLI).

This sequence belongs to the NqrDE/RnfAE family. Composed of six subunits; NqrA, NqrB, NqrC, NqrD, NqrE and NqrF.

It localises to the cell inner membrane. The enzyme catalyses a ubiquinone + n Na(+)(in) + NADH + H(+) = a ubiquinol + n Na(+)(out) + NAD(+). Functionally, NQR complex catalyzes the reduction of ubiquinone-1 to ubiquinol by two successive reactions, coupled with the transport of Na(+) ions from the cytoplasm to the periplasm. NqrA to NqrE are probably involved in the second step, the conversion of ubisemiquinone to ubiquinol. The polypeptide is Na(+)-translocating NADH-quinone reductase subunit D (Shewanella frigidimarina (strain NCIMB 400)).